A 467-amino-acid chain; its full sequence is Asparagine--tRNA ligase (467 aa).

The protein belongs to the class-II aminoacyl-tRNA synthetase family. Homodimer.

The protein resides in the cytoplasm. It catalyses the reaction tRNA(Asn) + L-asparagine + ATP = L-asparaginyl-tRNA(Asn) + AMP + diphosphate + H(+). This chain is Asparagine--tRNA ligase, found in Haemophilus influenzae (strain ATCC 51907 / DSM 11121 / KW20 / Rd).